We begin with the raw amino-acid sequence, 461 residues long: Argininosuccinate lyase (461 aa).

The protein belongs to the lyase 1 family. Argininosuccinate lyase subfamily.

The protein resides in the cytoplasm. It catalyses the reaction 2-(N(omega)-L-arginino)succinate = fumarate + L-arginine. It participates in amino-acid biosynthesis; L-arginine biosynthesis; L-arginine from L-ornithine and carbamoyl phosphate: step 3/3. The sequence is that of Argininosuccinate lyase from Streptococcus thermophilus (strain CNRZ 1066).